The primary structure comprises 425 residues: L-cysteine:1D-myo-inositol 2-amino-2-deoxy-alpha-D-glucopyranoside ligase (425 aa).

C43 contributes to the Zn(2+) binding site. L-cysteinyl-5'-AMP-binding positions include 43 to 46, S58, and 81 to 83; these read CGIT and NVT. The 'HIGH' region motif lies at 45–55; the sequence is ITPYDATHMGH. A 'ERGGDP' region motif is present at residues 199–204; it reads ERGGDP. W240 lines the L-cysteinyl-5'-AMP pocket. C244 is a Zn(2+) binding site. 262-264 serves as a coordination point for L-cysteinyl-5'-AMP; the sequence is GSD. Position 269 (H269) interacts with Zn(2+). V295 is a binding site for L-cysteinyl-5'-AMP. The 'KMSKS' region motif lies at 301–305; the sequence is KMSKS.

The protein belongs to the class-I aminoacyl-tRNA synthetase family. MshC subfamily. In terms of assembly, monomer. It depends on Zn(2+) as a cofactor.

The catalysed reaction is 1D-myo-inositol 2-amino-2-deoxy-alpha-D-glucopyranoside + L-cysteine + ATP = 1D-myo-inositol 2-(L-cysteinylamino)-2-deoxy-alpha-D-glucopyranoside + AMP + diphosphate + H(+). In terms of biological role, catalyzes the ATP-dependent condensation of GlcN-Ins and L-cysteine to form L-Cys-GlcN-Ins. This is L-cysteine:1D-myo-inositol 2-amino-2-deoxy-alpha-D-glucopyranoside ligase from Paenarthrobacter aurescens (strain TC1).